A 57-amino-acid polypeptide reads, in one-letter code: Cecropin-A (57 aa).

The first 21 residues, 1–21 (IFFFVFACLLALSAVSAAPEP), serve as a signal peptide directing secretion.

This sequence belongs to the cecropin family.

It localises to the secreted. Its function is as follows. Cecropins have lytic and antibacterial activity against several Gram-positive and Gram-negative bacteria. In Spodoptera litura (Asian cotton leafworm), this protein is Cecropin-A (CECA).